The primary structure comprises 501 residues: Cytochrome P450 4d2 (501 aa).

The heme site is built by Glu-311 and Cys-449.

The protein belongs to the cytochrome P450 family. Requires heme as cofactor.

The protein localises to the endoplasmic reticulum membrane. Its subcellular location is the microsome membrane. Functionally, involved in the metabolism of insect hormones and in the breakdown of synthetic insecticides. This is Cytochrome P450 4d2 (Cyp4d2) from Drosophila melanogaster (Fruit fly).